The primary structure comprises 274 residues: Cytochrome b-c1 complex subunit Rieske, mitochondrial (274 aa).

The Mitochondrial matrix segment spans residues 79 to 103 (SHTDVRVPDFSEYRRLEVLDSTKSS). A helical membrane pass occupies residues 104–140 (RESSEARKGFSYLVTGVTTVGVAYAAKNVVTQFVSSM). Topologically, residues 141–274 (SASADVLALA…FTSDDMVIVG (134 aa)) are mitochondrial intermembrane. Positions 187 to 272 (EAAVELSQLR…YEFTSDDMVI (86 aa)) constitute a Rieske domain. Cys-217, His-219, Cys-236, His-239, and Ser-241 together coordinate [2Fe-2S] cluster. Cys-222 and Cys-238 form a disulfide bridge.

The protein belongs to the Rieske iron-sulfur protein family. Component of the ubiquinol-cytochrome c oxidoreductase (cytochrome b-c1 complex, complex III, CIII), a multisubunit enzyme composed of 11 subunits. The complex is composed of 3 respiratory subunits cytochrome b, cytochrome c1 and Rieske protein UQCRFS1, 2 core protein subunits UQCRC1/QCR1 and UQCRC2/QCR2, and 6 low-molecular weight protein subunits UQCRH/QCR6, UQCRB/QCR7, UQCRQ/QCR8, UQCR10/QCR9, UQCR11/QCR10 and subunit 9, the cleavage product of Rieske protein UQCRFS1. The complex exists as an obligatory dimer and forms supercomplexes (SCs) in the inner mitochondrial membrane with NADH-ubiquinone oxidoreductase (complex I, CI) and cytochrome c oxidase (complex IV, CIV), resulting in different assemblies (supercomplex SCI(1)III(2)IV(1) and megacomplex MCI(2)III(2)IV(2)). Incorporation of the Rieske protein UQCRFS1 is the penultimate step in complex III assembly. Interacts with TTC19, which is involved in the clearance of UQCRFS1 fragments. As to quaternary structure, component of the ubiquinol-cytochrome c oxidoreductase (cytochrome b-c1 complex, complex III, CIII). Subunit 9 corresponds to the mitochondrial targeting sequence (MTS) of Rieske protein UQCRFS1. It is retained after processing and incorporated inside complex III, where it remains bound to the complex and localizes between the 2 core subunits UQCRC1/QCR1 and UQCRC2/QCR2. [2Fe-2S] cluster serves as cofactor. In terms of processing, proteolytic processing is necessary for the correct insertion of UQCRFS1 in the complex III dimer. Several fragments are generated during UQCRFS1 insertion, most probably due to the endogenous matrix-processing peptidase (MPP) activity of the 2 core protein subunits UQCRC1/QCR1 and UQCRC2/QCR2, which are homologous to the 2 mitochondrial-processing peptidase (MPP) subunits beta-MPP and alpha-MPP respectively. The action of the protease is also necessary for the clearance of the UQCRFS1 fragments.

Its subcellular location is the mitochondrion inner membrane. It catalyses the reaction a quinol + 2 Fe(III)-[cytochrome c](out) = a quinone + 2 Fe(II)-[cytochrome c](out) + 2 H(+)(out). Functionally, component of the ubiquinol-cytochrome c oxidoreductase, a multisubunit transmembrane complex that is part of the mitochondrial electron transport chain which drives oxidative phosphorylation. The respiratory chain contains 3 multisubunit complexes succinate dehydrogenase (complex II, CII), ubiquinol-cytochrome c oxidoreductase (cytochrome b-c1 complex, complex III, CIII) and cytochrome c oxidase (complex IV, CIV), that cooperate to transfer electrons derived from NADH and succinate to molecular oxygen, creating an electrochemical gradient over the inner membrane that drives transmembrane transport and the ATP synthase. The cytochrome b-c1 complex catalyzes electron transfer from ubiquinol to cytochrome c, linking this redox reaction to translocation of protons across the mitochondrial inner membrane, with protons being carried across the membrane as hydrogens on the quinol. In the process called Q cycle, 2 protons are consumed from the matrix, 4 protons are released into the intermembrane space and 2 electrons are passed to cytochrome c. The Rieske protein is a catalytic core subunit containing a [2Fe-2S] iron-sulfur cluster. It cycles between 2 conformational states during catalysis to transfer electrons from the quinol bound in the Q(0) site in cytochrome b to cytochrome c1. Incorporation of UQCRFS1 is the penultimate step in complex III assembly. In terms of biological role, component of the ubiquinol-cytochrome c oxidoreductase (cytochrome b-c1 complex, complex III, CIII). UQCRFS1 undergoes proteolytic processing once it is incorporated in the complex III dimer. One of the fragments, called subunit 9, corresponds to its mitochondrial targeting sequence (MTS). The proteolytic processing is necessary for the correct insertion of UQCRFS1 in the complex III dimer, but the persistence of UQCRFS1-derived fragments may prevent newly imported UQCRFS1 to be processed and assembled into complex III and is detrimental for the complex III structure and function. The chain is Cytochrome b-c1 complex subunit Rieske, mitochondrial (UQCRFS1) from Pongo pygmaeus (Bornean orangutan).